Consider the following 487-residue polypeptide: GTPase Der (487 aa).

EngA-type G domains are found at residues 3–167 (FTLA…EGFA) and 203–378 (LQIA…DIWN). GTP-binding positions include 9–16 (GRPNVGKS), 56–60 (DTAGL), 119–122 (NKAE), 209–216 (GRPNAGKS), 256–260 (DTAGM), and 321–324 (NKWD). The KH-like domain occupies 379-463 (RRITTARLNT…PIRLTMRGQG (85 aa)). Residues 451–487 (PGTPIRLTMRGQGDKNPFKERKFRTPSRLRKHLGKKD) are disordered. Residues 471-487 (RKFRTPSRLRKHLGKKD) are compositionally biased toward basic residues.

The protein belongs to the TRAFAC class TrmE-Era-EngA-EngB-Septin-like GTPase superfamily. EngA (Der) GTPase family. In terms of assembly, associates with the 50S ribosomal subunit.

Its function is as follows. GTPase that plays an essential role in the late steps of ribosome biogenesis. This Cereibacter sphaeroides (strain ATCC 17029 / ATH 2.4.9) (Rhodobacter sphaeroides) protein is GTPase Der.